A 267-amino-acid polypeptide reads, in one-letter code: Tetrahydromethanopterin S-methyltransferase subunit C (267 aa).

Helical transmembrane passes span 19 to 39 (IMAL…FAPP), 75 to 95 (IGML…SVGG), 97 to 117 (AGPI…GALA), 140 to 160 (TLVI…ASVV), 162 to 182 (YVVA…GILH), 198 to 218 (LMLA…ASSL), and 221 to 241 (GLMA…VAFS).

The protein belongs to the MtrC family. As to quaternary structure, the complex is composed of 8 subunits; MtrA, MtrB, MtrC, MtrD, MtrE, MtrF, MtrG and MtrH.

The protein resides in the cell membrane. The catalysed reaction is 5-methyl-5,6,7,8-tetrahydromethanopterin + coenzyme M + 2 Na(+)(in) = 5,6,7,8-tetrahydromethanopterin + methyl-coenzyme M + 2 Na(+)(out). It participates in one-carbon metabolism; methanogenesis from CO(2); methyl-coenzyme M from 5,10-methylene-5,6,7,8-tetrahydromethanopterin: step 2/2. Its function is as follows. Part of a complex that catalyzes the formation of methyl-coenzyme M and tetrahydromethanopterin from coenzyme M and methyl-tetrahydromethanopterin. This is an energy-conserving, sodium-ion translocating step. This chain is Tetrahydromethanopterin S-methyltransferase subunit C, found in Methanosarcina barkeri (strain Fusaro / DSM 804).